The chain runs to 275 residues: Undecaprenyl-diphosphatase (275 aa).

7 consecutive transmembrane segments (helical) span residues 8-28 (WTIV…PIPI), 45-65 (ARGL…VLII), 92-112 (FMFV…GVLF), 119-139 (FIGE…AAAI), 197-217 (FSFL…IPNI), 225-245 (ELWI…YFAL), and 255-275 (GNLK…LIFL).

Belongs to the UppP family.

It is found in the cell membrane. The catalysed reaction is di-trans,octa-cis-undecaprenyl diphosphate + H2O = di-trans,octa-cis-undecaprenyl phosphate + phosphate + H(+). Its function is as follows. Catalyzes the dephosphorylation of undecaprenyl diphosphate (UPP). Confers resistance to bacitracin. This chain is Undecaprenyl-diphosphatase, found in Oceanobacillus iheyensis (strain DSM 14371 / CIP 107618 / JCM 11309 / KCTC 3954 / HTE831).